Reading from the N-terminus, the 176-residue chain is HTH-type transcriptional regulator DctR (176 aa).

Residues 109–174 form the HTH luxR-type domain; sequence VPEANVSLSR…ELVRHQHIDY (66 aa). Residues 133–152 constitute a DNA-binding region (H-T-H motif); that stretch reads TEDILEKLKISLKTFYCHKH.

Its function is as follows. May act as a transcriptional regulator of dctA. Could be involved in the regulation of the genes coding for the type III secretion system in enterohaemorragic strains. The polypeptide is HTH-type transcriptional regulator DctR (dctR) (Escherichia coli O157:H7).